We begin with the raw amino-acid sequence, 771 residues long: Myotubularin-related protein 10 (771 aa).

In terms of domain architecture, Myotubularin phosphatase spans 217-657 (FETYSDWDRE…THIKLWKLCY (441 aa)). Ser603 and Ser745 each carry phosphoserine.

Belongs to the protein-tyrosine phosphatase family. Non-receptor class myotubularin subfamily.

The polypeptide is Myotubularin-related protein 10 (Mtmr10) (Mus musculus (Mouse)).